Consider the following 175-residue polypeptide: Apoptosis regulator Bcl-2 homolog (175 aa).

Positions K37–G42 are mediates interaction with human NOP53 and localization to host nucleolus. The helical transmembrane segment at M153 to S173 threads the bilayer.

Belongs to the Bcl-2 family. As to quaternary structure, interacts with human NOP53; may sequester ORF16 in host nucleolus and reduce its antiapoptotic activity. Interacts with ORF55.

It is found in the host membrane. Its subcellular location is the host mitochondrion. The protein resides in the host nucleus. The protein localises to the host nucleolus. Functionally, plays a role in the protection against apoptosis mediated by cytotoxic cells during the immune response to acute and persistent viral infection. Contributes therefore to latency establishment. Also plays a role in the inhibition of host starvation-induced autophagy which ultimately contributes to the viral chronic infection. Also participates in the viral genome replication within host nucleus. The polypeptide is Apoptosis regulator Bcl-2 homolog (vBCL2) (Homo sapiens (Human)).